The following is a 69-amino-acid chain: Large ribosomal subunit protein uL30 (69 aa).

The protein belongs to the universal ribosomal protein uL30 family. In terms of assembly, part of the 50S ribosomal subunit.

This is Large ribosomal subunit protein uL30 from Rhizobium etli (strain ATCC 51251 / DSM 11541 / JCM 21823 / NBRC 15573 / CFN 42).